The chain runs to 493 residues: Putative trans-acting regulator SP_1800 (493 aa).

Belongs to the AtxA/AcpA family.

This Streptococcus pneumoniae serotype 4 (strain ATCC BAA-334 / TIGR4) protein is Putative trans-acting regulator SP_1800.